Reading from the N-terminus, the 174-residue chain is Large ribosomal subunit protein bL12cz (174 aa).

The transit peptide at 1-45 (MASTTFSSAFSILSLPSSSPSPPPSPPRTLPVANRRRRAAAVAST) directs the protein to the chloroplast. The segment at 1–46 (MASTTFSSAFSILSLPSSSPSPPPSPPRTLPVANRRRRAAAVASTA) is disordered. Residues 7 to 18 (SSAFSILSLPSS) show a composition bias toward low complexity. The segment covering 19 to 29 (SPSPPPSPPRT) has biased composition (pro residues).

This sequence belongs to the bacterial ribosomal protein bL12 family.

The protein resides in the plastid. The protein localises to the chloroplast. The sequence is that of Large ribosomal subunit protein bL12cz (RPL12-1) from Secale cereale (Rye).